The following is a 697-amino-acid chain: Elongation factor G 2 (697 aa).

Positions T6 to T281 constitute a tr-type G domain. GTP is bound by residues A15 to T22, D79 to H83, and N133 to D136.

This sequence belongs to the TRAFAC class translation factor GTPase superfamily. Classic translation factor GTPase family. EF-G/EF-2 subfamily.

The protein resides in the cytoplasm. In terms of biological role, catalyzes the GTP-dependent ribosomal translocation step during translation elongation. During this step, the ribosome changes from the pre-translocational (PRE) to the post-translocational (POST) state as the newly formed A-site-bound peptidyl-tRNA and P-site-bound deacylated tRNA move to the P and E sites, respectively. Catalyzes the coordinated movement of the two tRNA molecules, the mRNA and conformational changes in the ribosome. The polypeptide is Elongation factor G 2 (Trichodesmium erythraeum (strain IMS101)).